The sequence spans 261 residues: Cytochrome c oxidase subunit 3 (261 aa).

Residues 1 to 15 (MTHQTHAYHMVNPSP) lie on the Mitochondrial matrix side of the membrane. A helical membrane pass occupies residues 16-34 (WPLTGALSALLMTSGLIMW). At 35–40 (FHFNST) the chain is on the mitochondrial intermembrane side. Residues 41–66 (TLLMLGLTTNMLTMYQWWRDVIREST) form a helical membrane-spanning segment. Over 67–72 (FQGHHT) the chain is Mitochondrial matrix. A helical membrane pass occupies residues 73–105 (PNVQKGLRYGMILFIISEVLFFTGFFWAFYHSS). Residues 106-128 (LAPTPELGGCWPPTGINPLNPLE) lie on the Mitochondrial intermembrane side of the membrane. Residues 129-152 (VPLLNTSVLLASGVSITWAHHSLM) traverse the membrane as a helical segment. Residues 153–155 (EGN) are Mitochondrial matrix-facing. A helical membrane pass occupies residues 156–183 (RNHMLQALFITIALGVYFTLLQASEYYE). Over 184-190 (APFTISD) the chain is Mitochondrial intermembrane. The chain crosses the membrane as a helical span at residues 191–223 (GVYGSTFFVATGFHGLHVIIGSTFLIVCFFRQL). At 224 to 232 (KFHFTSNHH) the chain is on the mitochondrial matrix side. The helical transmembrane segment at 233–256 (FGFEAAAWYWHFVDVVWLFLYVSI) threads the bilayer. The Mitochondrial intermembrane segment spans residues 257 to 261 (YWWGS).

Belongs to the cytochrome c oxidase subunit 3 family. Component of the cytochrome c oxidase (complex IV, CIV), a multisubunit enzyme composed of 14 subunits. The complex is composed of a catalytic core of 3 subunits MT-CO1, MT-CO2 and MT-CO3, encoded in the mitochondrial DNA, and 11 supernumerary subunits COX4I, COX5A, COX5B, COX6A, COX6B, COX6C, COX7A, COX7B, COX7C, COX8 and NDUFA4, which are encoded in the nuclear genome. The complex exists as a monomer or a dimer and forms supercomplexes (SCs) in the inner mitochondrial membrane with NADH-ubiquinone oxidoreductase (complex I, CI) and ubiquinol-cytochrome c oxidoreductase (cytochrome b-c1 complex, complex III, CIII), resulting in different assemblies (supercomplex SCI(1)III(2)IV(1) and megacomplex MCI(2)III(2)IV(2)).

The protein resides in the mitochondrion inner membrane. It catalyses the reaction 4 Fe(II)-[cytochrome c] + O2 + 8 H(+)(in) = 4 Fe(III)-[cytochrome c] + 2 H2O + 4 H(+)(out). Functionally, component of the cytochrome c oxidase, the last enzyme in the mitochondrial electron transport chain which drives oxidative phosphorylation. The respiratory chain contains 3 multisubunit complexes succinate dehydrogenase (complex II, CII), ubiquinol-cytochrome c oxidoreductase (cytochrome b-c1 complex, complex III, CIII) and cytochrome c oxidase (complex IV, CIV), that cooperate to transfer electrons derived from NADH and succinate to molecular oxygen, creating an electrochemical gradient over the inner membrane that drives transmembrane transport and the ATP synthase. Cytochrome c oxidase is the component of the respiratory chain that catalyzes the reduction of oxygen to water. Electrons originating from reduced cytochrome c in the intermembrane space (IMS) are transferred via the dinuclear copper A center (CU(A)) of subunit 2 and heme A of subunit 1 to the active site in subunit 1, a binuclear center (BNC) formed by heme A3 and copper B (CU(B)). The BNC reduces molecular oxygen to 2 water molecules using 4 electrons from cytochrome c in the IMS and 4 protons from the mitochondrial matrix. The polypeptide is Cytochrome c oxidase subunit 3 (MT-CO3) (Gazella subgutturosa (Goitred gazelle)).